Consider the following 254-residue polypeptide: CRISPR-associated endonuclease Cas1 (254 aa).

Residues E78, H146, and E161 each contribute to the Mn(2+) site.

Belongs to the CRISPR-associated endonuclease Cas1 family. In terms of assembly, homodimer, forms a heterotetramer with a Cas2 homodimer. It depends on Mg(2+) as a cofactor. The cofactor is Mn(2+).

Functionally, CRISPR (clustered regularly interspaced short palindromic repeat), is an adaptive immune system that provides protection against mobile genetic elements (viruses, transposable elements and conjugative plasmids). CRISPR clusters contain spacers, sequences complementary to antecedent mobile elements, and target invading nucleic acids. CRISPR clusters are transcribed and processed into CRISPR RNA (crRNA). Acts as a dsDNA endonuclease. Involved in the integration of spacer DNA into the CRISPR cassette. The sequence is that of CRISPR-associated endonuclease Cas1 from Leptospira interrogans serogroup Icterohaemorrhagiae serovar Lai (strain 56601).